The primary structure comprises 341 residues: ATPase GET3 (341 aa).

34 to 41 (KGGVGKTT) serves as a coordination point for ATP. The active site involves Asp-63. Positions 245 and 272 each coordinate ATP. Positions 283 and 286 each coordinate Zn(2+).

This sequence belongs to the arsA ATPase family. Homodimer.

The protein resides in the cytoplasm. It localises to the endoplasmic reticulum. Functionally, ATPase required for the post-translational delivery of tail-anchored (TA) proteins to the endoplasmic reticulum. Recognizes and selectively binds the transmembrane domain of TA proteins in the cytosol. This complex then targets to the endoplasmic reticulum by membrane-bound receptors, where the tail-anchored protein is released for insertion. This process is regulated by ATP binding and hydrolysis. ATP binding drives the homodimer towards the closed dimer state, facilitating recognition of newly synthesized TA membrane proteins. ATP hydrolysis is required for insertion. Subsequently, the homodimer reverts towards the open dimer state, lowering its affinity for the membrane-bound receptor, and returning it to the cytosol to initiate a new round of targeting. This chain is ATPase GET3, found in Ajellomyces dermatitidis (strain ER-3 / ATCC MYA-2586) (Blastomyces dermatitidis).